A 207-amino-acid polypeptide reads, in one-letter code: FMN-dependent NADH:quinone oxidoreductase 3 (207 aa).

FMN-binding positions include Ser-10 and Ser-16–Ser-18.

This sequence belongs to the azoreductase type 1 family. In terms of assembly, homodimer. The cofactor is FMN.

It carries out the reaction 2 a quinone + NADH + H(+) = 2 a 1,4-benzosemiquinone + NAD(+). The catalysed reaction is N,N-dimethyl-1,4-phenylenediamine + anthranilate + 2 NAD(+) = 2-(4-dimethylaminophenyl)diazenylbenzoate + 2 NADH + 2 H(+). Its function is as follows. Quinone reductase that provides resistance to thiol-specific stress caused by electrophilic quinones. Also exhibits azoreductase activity. Catalyzes the reductive cleavage of the azo bond in aromatic azo compounds to the corresponding amines. The chain is FMN-dependent NADH:quinone oxidoreductase 3 from Burkholderia lata (strain ATCC 17760 / DSM 23089 / LMG 22485 / NCIMB 9086 / R18194 / 383).